Reading from the N-terminus, the 61-residue chain is Metallothionein-1A (61 aa).

Met1 carries the N-acetylmethionine modification. The segment at 1-29 is beta; it reads MDPNCSCPTGGSCSCAGSCTCKACRCPSC. Residues Cys5, Cys7, Cys13, Cys15, Cys19, Cys21, Cys24, Cys26, Cys29, Cys33, Cys34, Cys36, Cys37, Cys41, Cys44, Cys48, Cys50, and Cys57 each contribute to the a divalent metal cation site. An alpha region spans residues 30-61; that stretch reads KKSCCSCCPVGCAKCAQGCVCKGASDKCSCCA. The residue at position 58 (Ser58) is a Phosphoserine. The a divalent metal cation site is built by Cys59 and Cys60.

Belongs to the metallothionein superfamily. Type 1 family. In terms of assembly, monomer.

Functionally, metallothioneins have a high content of cysteine residues that bind various heavy metals; these proteins are transcriptionally regulated by both heavy metals and glucocorticoids. The polypeptide is Metallothionein-1A (MT1A) (Bos taurus (Bovine)).